A 452-amino-acid chain; its full sequence is COP9 signalosome complex subunit 11 (452 aa).

In terms of domain architecture, PCI spans 205–374 (FYIEDPKTMM…ISYSKRSIVD (170 aa)).

In terms of assembly, component of a COP9 signalosome-like (CSN) complex.

It is found in the cytoplasm. It localises to the nucleus. Its function is as follows. Component of the COP9 signalosome (CSN) complex that acts as an regulator of the ubiquitin (Ubl) conjugation pathway by mediating the deneddylation of the cullin subunit of SCF-type E3 ubiquitin-protein ligase complexes The CSN complex is involved in the regulation of the mating pheromone response. PCI8 may also be involved in transcriptional and translational control. The chain is COP9 signalosome complex subunit 11 (PCI8) from Candida glabrata (strain ATCC 2001 / BCRC 20586 / JCM 3761 / NBRC 0622 / NRRL Y-65 / CBS 138) (Yeast).